We begin with the raw amino-acid sequence, 54 residues long: ATP synthase F(0) complex subunit 8 (54 aa).

The chain crosses the membrane as a helical span at residues Leu-4 to Ile-24. The disordered stretch occupies residues Asn-35 to Trp-54. The span at Ala-42–Trp-54 shows a compositional bias: basic and acidic residues.

Belongs to the ATPase protein 8 family. In terms of assembly, component of the ATP synthase complex composed at least of ATP5F1A/subunit alpha, ATP5F1B/subunit beta, ATP5MC1/subunit c (homooctomer), MT-ATP6/subunit a, MT-ATP8/subunit 8, ATP5ME/subunit e, ATP5MF/subunit f, ATP5MG/subunit g, ATP5MK/subunit k, ATP5MJ/subunit j, ATP5F1C/subunit gamma, ATP5F1D/subunit delta, ATP5F1E/subunit epsilon, ATP5PF/subunit F6, ATP5PB/subunit b, ATP5PD/subunit d, ATP5PO/subunit OSCP. ATP synthase complex consists of a soluble F(1) head domain (subunits alpha(3) and beta(3)) - the catalytic core - and a membrane F(0) domain - the membrane proton channel (subunits c, a, 8, e, f, g, k and j). These two domains are linked by a central stalk (subunits gamma, delta, and epsilon) rotating inside the F1 region and a stationary peripheral stalk (subunits F6, b, d, and OSCP).

It is found in the mitochondrion membrane. Subunit 8, of the mitochondrial membrane ATP synthase complex (F(1)F(0) ATP synthase or Complex V) that produces ATP from ADP in the presence of a proton gradient across the membrane which is generated by electron transport complexes of the respiratory chain. ATP synthase complex consist of a soluble F(1) head domain - the catalytic core - and a membrane F(1) domain - the membrane proton channel. These two domains are linked by a central stalk rotating inside the F(1) region and a stationary peripheral stalk. During catalysis, ATP synthesis in the catalytic domain of F(1) is coupled via a rotary mechanism of the central stalk subunits to proton translocation. In vivo, can only synthesize ATP although its ATP hydrolase activity can be activated artificially in vitro. Part of the complex F(0) domain. The protein is ATP synthase F(0) complex subunit 8 of Cyprinus carpio (Common carp).